We begin with the raw amino-acid sequence, 304 residues long: Acetyl-coenzyme A carboxylase carboxyl transferase subunit beta (304 aa).

The CoA carboxyltransferase N-terminal domain maps to 25-294 (LWIKCPETGE…KAVKRDTATE (270 aa)).

This sequence belongs to the AccD/PCCB family. Acetyl-CoA carboxylase is a heterohexamer composed of biotin carboxyl carrier protein (AccB), biotin carboxylase (AccC) and two subunits each of ACCase subunit alpha (AccA) and ACCase subunit beta (AccD).

The protein resides in the cytoplasm. The enzyme catalyses N(6)-carboxybiotinyl-L-lysyl-[protein] + acetyl-CoA = N(6)-biotinyl-L-lysyl-[protein] + malonyl-CoA. It participates in lipid metabolism; malonyl-CoA biosynthesis; malonyl-CoA from acetyl-CoA: step 1/1. Functionally, component of the acetyl coenzyme A carboxylase (ACC) complex. Biotin carboxylase (BC) catalyzes the carboxylation of biotin on its carrier protein (BCCP) and then the CO(2) group is transferred by the transcarboxylase to acetyl-CoA to form malonyl-CoA. This chain is Acetyl-coenzyme A carboxylase carboxyl transferase subunit beta, found in Rhizobium meliloti (strain 1021) (Ensifer meliloti).